Here is a 354-residue protein sequence, read N- to C-terminus: Rhodopsin (354 aa).

The Extracellular portion of the chain corresponds to 1–36 (MNGTEGPNFYVPFSNKSGVVRSPFEYPQYYLAEPWQ). Residues N2 and N15 are each glycosylated (N-linked (GlcNAc...) asparagine). Residues 37-61 (YSVLAAYMFLLILLGFPVNFLTLYV) traverse the membrane as a helical segment. Residues 62–73 (TIQHKKLRTPLN) lie on the Cytoplasmic side of the membrane. Residues 74-96 (YILLNLAFANHFMVFGGFPVTMY) form a helical membrane-spanning segment. At 97–110 (SSMHGYFVFGQTGC) the chain is on the extracellular side. C110 and C187 are oxidised to a cystine. Residues 111 to 133 (YIEGFFATMGGEIALWSLVVLAI) form a helical membrane-spanning segment. A 'Ionic lock' involved in activated form stabilization motif is present at residues 134–136 (ERY). The Cytoplasmic segment spans residues 134–152 (ERYVVVCKPMSNFRFGENH). The chain crosses the membrane as a helical span at residues 153–173 (AIMGVMMTWIMALACAAPPLF). Residues 174 to 202 (GWSRYIPEGMQCSCGVDYYTLKPEVNNES) lie on the Extracellular side of the membrane. The helical transmembrane segment at 203–224 (FVIYMFLVHFTIPLMIIFFCYG) threads the bilayer. Residues 225–252 (RLVCTVKEAAAQQQESATTQKAEKEVTR) lie on the Cytoplasmic side of the membrane. A helical membrane pass occupies residues 253–274 (MVIIMVVAFLICWVPYASVAFY). At 275–286 (IFSNQGTDFGPI) the chain is on the extracellular side. Residues 287 to 308 (FMTVPAFFAKSSAIYNPVIYIV) traverse the membrane as a helical segment. Residue K296 is modified to N6-(retinylidene)lysine. Over 309-354 (LNKQFRNCMITTICCGKNPFGDDETTSAATSKTEASSVSSSQVSPA) the chain is Cytoplasmic. 2 S-palmitoyl cysteine lipidation sites follow: C322 and C323. The tract at residues 332 to 354 (ETTSAATSKTEASSVSSSQVSPA) is disordered. Residues 334–354 (TSAATSKTEASSVSSSQVSPA) show a composition bias toward low complexity.

Belongs to the G-protein coupled receptor 1 family. Opsin subfamily. Contains one covalently linked retinal chromophore. Upon light absorption, the covalently bound 11-cis-retinal is converted to all-trans-retinal. After hydrolysis of the Schiff base and release of the covalently bound all-trans-retinal, active rhodopsin is regenerated by binding of a fresh molecule of 11-cis-retinal.

The protein resides in the membrane. Its subcellular location is the cell projection. The protein localises to the cilium. It is found in the photoreceptor outer segment. In terms of biological role, photoreceptor required for image-forming vision at low light intensity. Required for photoreceptor cell viability after birth. Light-induced isomerization of 11-cis to all-trans retinal triggers a conformational change that activates signaling via G-proteins. Subsequent receptor phosphorylation mediates displacement of the bound G-protein alpha subunit by arrestin and terminates signaling. The polypeptide is Rhodopsin (RHO) (Ambystoma tigrinum (Eastern tiger salamander)).